We begin with the raw amino-acid sequence, 693 residues long: Heat shock protein homolog SSE2 (693 aa).

The segment at 653-693 (LRANQETSKMNDIAEKLAEQRRARAASDDSDDNNDENMDLD) is disordered. Residues 664–679 (DIAEKLAEQRRARAAS) show a composition bias toward basic and acidic residues. Over residues 680–693 (DDSDDNNDENMDLD) the composition is skewed to acidic residues.

This sequence belongs to the heat shock protein 70 family.

In terms of biological role, has a calcium-dependent calmodulin-binding activity. In Saccharomyces cerevisiae (strain ATCC 204508 / S288c) (Baker's yeast), this protein is Heat shock protein homolog SSE2 (SSE2).